A 145-amino-acid polypeptide reads, in one-letter code: Basic phospholipase A2 PC17 (145 aa).

The N-terminal stretch at 1-21 is a signal peptide; it reads MYPAHLLVLLAVCVSLLGASA. A propeptide spanning residues 22 to 27 is cleaved from the precursor; the sequence is ISNQPR. 7 disulfides stabilise this stretch: Cys38–Cys98, Cys54–Cys144, Cys56–Cys72, Cys71–Cys125, Cys78–Cys118, Cys87–Cys111, and Cys105–Cys116. Residues Tyr55, Gly57, and Gly59 each contribute to the Ca(2+) site. His75 is a catalytic residue. Asp76 is a binding site for Ca(2+). Asp119 is an active-site residue.

Belongs to the phospholipase A2 family. Group I subfamily. D49 sub-subfamily. Requires Ca(2+) as cofactor. As to expression, expressed by the venom gland.

The protein resides in the secreted. It carries out the reaction a 1,2-diacyl-sn-glycero-3-phosphocholine + H2O = a 1-acyl-sn-glycero-3-phosphocholine + a fatty acid + H(+). In terms of biological role, snake venom phospholipase A2 (PLA2) that inhibits neuromuscular transmission by blocking acetylcholine release from the nerve termini. PLA2 catalyzes the calcium-dependent hydrolysis of the 2-acyl groups in 3-sn-phosphoglycerides. This chain is Basic phospholipase A2 PC17, found in Laticauda colubrina (Yellow-lipped sea krait).